We begin with the raw amino-acid sequence, 143 residues long: Large-conductance mechanosensitive channel (143 aa).

2 helical membrane passes run 10 to 30 (FAVK…GAFS) and 89 to 109 (GSFI…FLMV).

Belongs to the MscL family. In terms of assembly, homopentamer.

The protein resides in the cell inner membrane. In terms of biological role, channel that opens in response to stretch forces in the membrane lipid bilayer. May participate in the regulation of osmotic pressure changes within the cell. In Burkholderia ambifaria (strain ATCC BAA-244 / DSM 16087 / CCUG 44356 / LMG 19182 / AMMD) (Burkholderia cepacia (strain AMMD)), this protein is Large-conductance mechanosensitive channel.